A 229-amino-acid chain; its full sequence is Heptaprenylglyceryl phosphate synthase (229 aa).

Lys12 contributes to the sn-glycerol 1-phosphate binding site. 2 residues coordinate Mg(2+): Asp14 and Ser40. Residues 159-164, Gly189, and 209-210 each bind sn-glycerol 1-phosphate; these read YLEYSG and GN.

The protein belongs to the GGGP/HepGP synthase family. Group I subfamily. In terms of assembly, homodimer. Requires Mg(2+) as cofactor.

The catalysed reaction is sn-glycerol 1-phosphate + all-trans-heptaprenyl diphosphate = 3-heptaprenyl-sn-glycero-1-phosphate + diphosphate. Its pathway is membrane lipid metabolism; glycerophospholipid metabolism. Prenyltransferase that catalyzes in vivo the transfer of the heptaprenyl moiety of heptaprenyl pyrophosphate (HepPP; 35 carbon atoms) to the C3 hydroxyl of sn-glycerol-1-phosphate (G1P), producing heptaprenylglyceryl phosphate (HepGP). This reaction is an ether-bond-formation step in the biosynthesis of archaea-type G1P-based membrane lipids found in Bacillales. The protein is Heptaprenylglyceryl phosphate synthase of Bacillus thuringiensis (strain Al Hakam).